The primary structure comprises 79 residues: uncharacterized protein (79 aa).

Residues 1–27 (MRQRGQEHLPTSVKSEPRACNNPTVAE) form a disordered region.

This is an uncharacterized protein from Homo sapiens (Human).